We begin with the raw amino-acid sequence, 77 residues long: UPF0291 protein OB1671 (77 aa).

Residues aspartate 56–histidine 77 are disordered. The span at proline 57 to histidine 77 shows a compositional bias: basic and acidic residues.

It belongs to the UPF0291 family.

It is found in the cytoplasm. The polypeptide is UPF0291 protein OB1671 (Oceanobacillus iheyensis (strain DSM 14371 / CIP 107618 / JCM 11309 / KCTC 3954 / HTE831)).